The primary structure comprises 203 residues: MKQNKKNLPIILASSSPARIELLNRIKIIPSQIIPADIDETPNLRELPAPLAIRLAYEKAIKVASQIEESAIIIAADTVAAVGRRILPKATTYEEVKNCIKMVSGRRHRVYTGLCIIKKENDQLTVRQKIVQTIVKFKKLSDEEINFYCSLDEGIDKAGGCKISGYAEAFISFISGSYSNVMGLPLFETVNALTSLGFKVYNR.

The active-site Proton acceptor is the Asp-77.

This sequence belongs to the Maf family. Requires a divalent metal cation as cofactor.

Its subcellular location is the cytoplasm. It catalyses the reaction a ribonucleoside 5'-triphosphate + H2O = a ribonucleoside 5'-phosphate + diphosphate + H(+). The enzyme catalyses a 2'-deoxyribonucleoside 5'-triphosphate + H2O = a 2'-deoxyribonucleoside 5'-phosphate + diphosphate + H(+). Nucleoside triphosphate pyrophosphatase. May have a dual role in cell division arrest and in preventing the incorporation of modified nucleotides into cellular nucleic acids. In Rickettsia felis (strain ATCC VR-1525 / URRWXCal2) (Rickettsia azadi), this protein is Nucleoside triphosphate pyrophosphatase.